Consider the following 236-residue polypeptide: EF-hand domain-containing protein D1 (236 aa).

The interval 1–48 is disordered; that stretch reads MASEELASKLQRRLQWEEGDSGLQPAPGAAPDPEPQPQPPAWAPTARA. Residues 28-42 are compositionally biased toward pro residues; sequence GAAPDPEPQPQPPAW. EF-hand domains follow at residues 87–122 and 123–158; these read RLIK…LGAP and QTHL…AAAG. Residues D100, D104, E111, D136, D138, D140, K142, and E147 each coordinate Ca(2+).

It is found in the mitochondrion inner membrane. Acts as a calcium sensor for mitochondrial flash (mitoflash) activation, an event characterized by stochastic bursts of superoxide production. May play a role in neuronal differentiation. This chain is EF-hand domain-containing protein D1 (EFHD1), found in Bos taurus (Bovine).